Reading from the N-terminus, the 359-residue chain is MQFIDQAEIQVRAGKGGDGIVAFRREKYVPAGGPAGGNGGPGGSVILRVNPQLQTLLDFHYTQLFKAEDGQRGGPKNMTGAAGNDRIIEVPAGTMVYDTETGALLGDLTDANQTLLVAKGGKGGLGNKFFLSNHNRAPDYALPGLEGEERSLRLELKLLAEVGIIGLPNAGKSTLISVLSAARPKIADYPFTTLVPNLGVVRPPNGDGVVFADIPGLIAGAHQGIGLGHDFLRHIERTRLLIHLIDSTAEDPLRDYVTIQTELEAYGHGLSDRPQIVVLNKIDALLPEDLTDLQARLQSEIHTPVFAISAIARTGLDALLHQIWQELEQLDLATEDASYPGSGAIEGLTPGLLSRGVVE.

Residues 1–159 enclose the Obg domain; sequence MQFIDQAEIQ…RSLRLELKLL (159 aa). An OBG-type G domain is found at 160–328; the sequence is AEVGIIGLPN…LLHQIWQELE (169 aa). GTP contacts are provided by residues 166–173, 191–195, 213–216, 280–283, and 309–311; these read GLPNAGKS, FTTLV, DIPG, NKID, and SAI. The Mg(2+) site is built by Ser173 and Thr193.

The protein belongs to the TRAFAC class OBG-HflX-like GTPase superfamily. OBG GTPase family. In terms of assembly, monomer. Mg(2+) serves as cofactor.

Its subcellular location is the cytoplasm. Functionally, an essential GTPase which binds GTP, GDP and possibly (p)ppGpp with moderate affinity, with high nucleotide exchange rates and a fairly low GTP hydrolysis rate. Plays a role in control of the cell cycle, stress response, ribosome biogenesis and in those bacteria that undergo differentiation, in morphogenesis control. The chain is GTPase Obg from Cyanothece sp. (strain PCC 7425 / ATCC 29141).